Reading from the N-terminus, the 198-residue chain is Endoribonuclease YbeY (198 aa).

Residues His-156, His-160, and His-166 each coordinate Zn(2+).

This sequence belongs to the endoribonuclease YbeY family. It depends on Zn(2+) as a cofactor.

It localises to the cytoplasm. Functionally, single strand-specific metallo-endoribonuclease involved in late-stage 70S ribosome quality control and in maturation of the 3' terminus of the 16S rRNA. The polypeptide is Endoribonuclease YbeY (Cupriavidus necator (strain ATCC 17699 / DSM 428 / KCTC 22496 / NCIMB 10442 / H16 / Stanier 337) (Ralstonia eutropha)).